We begin with the raw amino-acid sequence, 250 residues long: Cobalt transport protein CbiM (250 aa).

Positions 1 to 25 are cleaved as a signal peptide; it reads MKQNIKLGVIAALMLIVLTPVTSNA. The next 6 helical transmembrane spans lie at 33 to 53, 68 to 88, 100 to 120, 132 to 152, 163 to 183, and 205 to 225; these read LPVKWSIAWGVIFIPFFLVGL, VLLALCGAFVFVLSALKIPSV, LGAIMFGPSVMFVLGTIVLIF, TLGANAFSMAIIGPIISFLIF, AMPVFLAAAIGDLATYTVTSI, and GIFFMTQIPIAIAEGILTVIV.

The protein belongs to the CbiM family. As to quaternary structure, forms an energy-coupling factor (ECF) transporter complex composed of an ATP-binding protein (A component, CbiO), a transmembrane protein (T component, CbiQ) and 2 possible substrate-capture proteins (S components, CbiM and CbiN) of unknown stoichimetry.

The protein localises to the cell membrane. It participates in cofactor biosynthesis; adenosylcobalamin biosynthesis. In terms of biological role, part of the energy-coupling factor (ECF) transporter complex CbiMNOQ involved in cobalt import. The protein is Cobalt transport protein CbiM of Clostridioides difficile (strain R20291) (Peptoclostridium difficile).